The following is a 318-amino-acid chain: MANTNKRLAVIFGDVTLGLKGPDFHYLFSYQTGGPESLRIQGKEWLYRSPKPTFWRATTDNDRGNQFPLKSGMWLAADQFIACQSITVAIDGQTIPLPIAPENNRYSGRETAQEVTVTYTYQTITTPQTTVEVSYTIQASGKIRVAVTYHGQAGLPSLPVFGLRFVMPTPATRFIYQGLSGETYPDRMAGGIAGEYEVTGLPVTPYLVPQDCGVHMATDWVTIYRQAVLDNCLHEPVETGLKFKMVDQPFAFSCLPYTAEELENATHHSELPAPHRTVLNLLGAVRGVGGIDSWGSDVEVAYQIDATQDRHFEFEISF.

This sequence belongs to the bacterial beta-galactosidase small subunit family. In terms of assembly, heterodimer of a large (LacL) and a small subunit (LacM).

The enzyme catalyses Hydrolysis of terminal non-reducing beta-D-galactose residues in beta-D-galactosides.. Its function is as follows. Component of a beta-galactosidase. In Latilactobacillus sakei (Lactobacillus sakei), this protein is Beta-galactosidase small subunit.